The primary structure comprises 306 residues: MYVHIDNFLVYLRVEKNASPRTTESYQKDLFHGLDYFASRLGKEDHAIVPSDIDHRIFRHYLAHMQKQGLARATMARRLAAWRSFYRYLYREKIIDGNPLLRVASPKLEKRLPRFLYEDEAKELVEAPDTKQPLGMRDRALLETLYAGGLRISELVLLDLGDLDISSGYIRVTGKRARERLVPLGSMAVEALQAYLAKARPRLMANSVAKKINNALFLNCRGERLSARGIRKILDKYVEKVSLERKISPHTLRHSFATHLLNAGADLRSVQELMGHVRLSSTQVYTHVTGERLKKVYRKSHPRAKG.

Residues 1-90 (MYVHIDNFLV…AWRSFYRYLY (90 aa)) enclose the Core-binding (CB) domain. One can recognise a Tyr recombinase domain in the interval 111–298 (RLPRFLYEDE…TGERLKKVYR (188 aa)). Active-site residues include arginine 151, lysine 175, histidine 250, arginine 253, and histidine 276. The active-site O-(3'-phospho-DNA)-tyrosine intermediate is the tyrosine 285.

Belongs to the 'phage' integrase family. XerC subfamily. As to quaternary structure, forms a cyclic heterotetrameric complex composed of two molecules of XerC and two molecules of XerD.

Its subcellular location is the cytoplasm. Its function is as follows. Site-specific tyrosine recombinase, which acts by catalyzing the cutting and rejoining of the recombining DNA molecules. The XerC-XerD complex is essential to convert dimers of the bacterial chromosome into monomers to permit their segregation at cell division. It also contributes to the segregational stability of plasmids. This chain is Tyrosine recombinase XerC, found in Pelotomaculum thermopropionicum (strain DSM 13744 / JCM 10971 / SI).